The following is a 329-amino-acid chain: Peroxidase 56 (329 aa).

The signal sequence occupies residues 1-31; sequence MAALKMTISCFLFLQVIYCLLSSFAPTNVQG. 4 disulfides stabilise this stretch: Cys-41–Cys-119, Cys-74–Cys-79, Cys-125–Cys-325, and Cys-204–Cys-236. Residue His-72 is the Proton acceptor of the active site. 5 residues coordinate Ca(2+): Asp-73, Val-76, Gly-78, Glu-80, and Ser-82. Asn-158 carries N-linked (GlcNAc...) asparagine glycosylation. Pro-167 is a substrate binding site. N-linked (GlcNAc...) asparagine glycosylation occurs at Asn-172. His-197 lines the heme b pocket. Residue Thr-198 coordinates Ca(2+). A glycan (N-linked (GlcNAc...) asparagine) is linked at Asn-213. Ca(2+) is bound by residues Asp-248, Ser-251, and Asp-256.

This sequence belongs to the peroxidase family. Classical plant (class III) peroxidase subfamily. Heme b is required as a cofactor. Ca(2+) serves as cofactor.

It localises to the secreted. It catalyses the reaction 2 a phenolic donor + H2O2 = 2 a phenolic radical donor + 2 H2O. Its function is as follows. Removal of H(2)O(2), oxidation of toxic reductants, biosynthesis and degradation of lignin, suberization, auxin catabolism, response to environmental stresses such as wounding, pathogen attack and oxidative stress. These functions might be dependent on each isozyme/isoform in each plant tissue. In Arabidopsis thaliana (Mouse-ear cress), this protein is Peroxidase 56 (PER56).